The primary structure comprises 180 residues: D-glycero-beta-D-manno-heptose-1,7-bisphosphate 7-phosphatase (180 aa).

The active-site Nucleophile is the D14. Residues D14 and D16 each contribute to the Mg(2+) site. Substrate contacts are provided by residues 14–16 (DRD), 22–25 (NDHY), and 56–59 (TNQS). The active-site Proton donor is the D16. C95, H97, C110, and H112 together coordinate Zn(2+). Substrate is bound at residue 113-114 (RK). D139 lines the Mg(2+) pocket.

The protein belongs to the gmhB family. Monomer. Mg(2+) is required as a cofactor.

Its subcellular location is the cytoplasm. The catalysed reaction is D-glycero-beta-D-manno-heptose 1,7-bisphosphate + H2O = D-glycero-beta-D-manno-heptose 1-phosphate + phosphate. It participates in nucleotide-sugar biosynthesis; ADP-L-glycero-beta-D-manno-heptose biosynthesis; ADP-L-glycero-beta-D-manno-heptose from D-glycero-beta-D-manno-heptose 7-phosphate: step 2/4. Its pathway is bacterial outer membrane biogenesis; LPS core biosynthesis. Functionally, converts the D-glycero-beta-D-manno-heptose 1,7-bisphosphate (beta-HBP) intermediate into D-glycero-beta-D-manno-heptose 1-phosphate by removing the phosphate group at the C-7 position. Also catalyzes the dephosphorylation of D-glycero-alpha-D-manno-heptose 1,7-bisphosphate in vitro. This is D-glycero-beta-D-manno-heptose-1,7-bisphosphate 7-phosphatase from Rhodopseudomonas palustris (strain ATCC BAA-98 / CGA009).